We begin with the raw amino-acid sequence, 177 residues long: Large ribosomal subunit protein uL6 (177 aa).

The protein belongs to the universal ribosomal protein uL6 family. In terms of assembly, part of the 50S ribosomal subunit.

This protein binds to the 23S rRNA, and is important in its secondary structure. It is located near the subunit interface in the base of the L7/L12 stalk, and near the tRNA binding site of the peptidyltransferase center. This chain is Large ribosomal subunit protein uL6, found in Shewanella amazonensis (strain ATCC BAA-1098 / SB2B).